Here is a 330-residue protein sequence, read N- to C-terminus: Triplex capsid protein 1 (330 aa).

This sequence belongs to the herpesviridae TRX1 protein family. Interacts with TRX2, MCP and capsid vertex component 2/CVC2.

The protein localises to the virion. It localises to the host nucleus. Structural component of the T=16 icosahedral capsid. The capsid is composed of pentamers and hexamers of major capsid protein/MCP, which are linked together by heterotrimers called triplexes. These triplexes are formed by a single molecule of triplex protein 1/TRX1 and two copies of triplex protein 2/TRX2. Additionally, TRX1 is required for efficient transport of TRX2 to the nucleus, which is the site of capsid assembly. This Saimiriine herpesvirus 2 (strain 11) (SaHV-2) protein is Triplex capsid protein 1.